The sequence spans 330 residues: Aspartate--ammonia ligase (330 aa).

This sequence belongs to the class-II aminoacyl-tRNA synthetase family. AsnA subfamily.

Its subcellular location is the cytoplasm. The enzyme catalyses L-aspartate + NH4(+) + ATP = L-asparagine + AMP + diphosphate + H(+). Its pathway is amino-acid biosynthesis; L-asparagine biosynthesis; L-asparagine from L-aspartate (ammonia route): step 1/1. In Streptococcus pneumoniae serotype 19F (strain G54), this protein is Aspartate--ammonia ligase.